Here is a 763-residue protein sequence, read N- to C-terminus: Phosphoglycerol transferase I (763 aa).

4 helical membrane-spanning segments follow: residues 1–21, 26–46, 77–97, and 108–128; these read MSELLSFALFLASVLIYAWKA, WWFAATLTVLGLFVVLNITLF, ILPGIGIVLGLAAVFGALGWI, and FGYSLLALLLALGSVDASPAF.

This sequence belongs to the OpgB family.

Its subcellular location is the cell inner membrane. The enzyme catalyses a phosphatidylglycerol + a membrane-derived-oligosaccharide D-glucose = a 1,2-diacyl-sn-glycerol + a membrane-derived-oligosaccharide 6-(glycerophospho)-D-glucose.. The protein operates within glycan metabolism; osmoregulated periplasmic glucan (OPG) biosynthesis. Functionally, transfers a phosphoglycerol residue from phosphatidylglycerol to the membrane-bound nascent glucan backbones. This chain is Phosphoglycerol transferase I, found in Escherichia coli (strain UTI89 / UPEC).